The chain runs to 344 residues: Glycerol-3-phosphate dehydrogenase [NAD(P)+] (344 aa).

3 residues coordinate NADPH: Trp18, His38, and Lys115. Positions 115, 144, and 146 each coordinate sn-glycerol 3-phosphate. Ala148 serves as a coordination point for NADPH. Sn-glycerol 3-phosphate is bound by residues Lys199, Asp252, Ser262, Arg263, and Asn264. Catalysis depends on Lys199, which acts as the Proton acceptor. Arg263 provides a ligand contact to NADPH. NADPH contacts are provided by Val288 and Glu290.

Belongs to the NAD-dependent glycerol-3-phosphate dehydrogenase family.

Its subcellular location is the cytoplasm. The enzyme catalyses sn-glycerol 3-phosphate + NAD(+) = dihydroxyacetone phosphate + NADH + H(+). The catalysed reaction is sn-glycerol 3-phosphate + NADP(+) = dihydroxyacetone phosphate + NADPH + H(+). It participates in membrane lipid metabolism; glycerophospholipid metabolism. In terms of biological role, catalyzes the reduction of the glycolytic intermediate dihydroxyacetone phosphate (DHAP) to sn-glycerol 3-phosphate (G3P), the key precursor for phospholipid synthesis. This is Glycerol-3-phosphate dehydrogenase [NAD(P)+] from Hydrogenovibrio crunogenus (strain DSM 25203 / XCL-2) (Thiomicrospira crunogena).